Consider the following 40-residue polypeptide: Plasma membrane ATPase proteolipid 1 (40 aa).

Residues 1 to 2 (MT) constitute a propeptide that is removed on maturation. A helical membrane pass occupies residues 3–26 (LPGGVILVFILVGLACIAIIATII). Topologically, residues 27 to 40 (YRKWQARQRGLQRF) are cytoplasmic.

In terms of assembly, monomer and homodimer. Associated with the 100 kDa subunit of the plasma membrane H(+)-ATPase.

The protein localises to the cell membrane. This Saccharomyces cerevisiae (strain ATCC 204508 / S288c) (Baker's yeast) protein is Plasma membrane ATPase proteolipid 1 (PMP1).